Reading from the N-terminus, the 65-residue chain is Large ribosomal subunit protein bL35 (65 aa).

The protein belongs to the bacterial ribosomal protein bL35 family.

The polypeptide is Large ribosomal subunit protein bL35 (Pectobacterium atrosepticum (strain SCRI 1043 / ATCC BAA-672) (Erwinia carotovora subsp. atroseptica)).